Reading from the N-terminus, the 184-residue chain is TATA-box-binding protein (184 aa).

Tandem repeats lie at residues 9-85 (IENI…IDKL) and 100-178 (VQNI…KKDL).

Belongs to the TBP family.

General factor that plays a role in the activation of archaeal genes transcribed by RNA polymerase. Binds specifically to the TATA box promoter element which lies close to the position of transcription initiation. This chain is TATA-box-binding protein, found in Picrophilus torridus (strain ATCC 700027 / DSM 9790 / JCM 10055 / NBRC 100828 / KAW 2/3).